The primary structure comprises 294 residues: MAHGIPSQGKVTITVDEYSSNPTQAFTHYNINQSRFQPPHVHMVDPIPYDTPKPAGHTRFVCISDTHSRTDGIQMPYGDILLHTGDFTELGLPSEVKKFNDWLGNLPYEYKIVIAGNHELTFDKEFMADLVKQDYYRFPSVSKLKPEDFDNVQSLLTNSIYLQDSEVTVKGFRIYGAPWTPWFNGWGFNLPRGQSLLDKWNLIPEGTDILMTHGPPLGFRDWVPKELQRVGCVELLNTVQRRVRPKLHVFGGIHEGYGTMTDGYTTYINASTCTVSFQPTNPPIIFDLPNPQGS.

Positions 65, 67, 86, 117, and 213 each coordinate Mn(2+). 117–118 (NH) lines the GMP pocket. GMP is bound by residues 225–226 (KE) and 254–255 (HE). A Mn(2+)-binding site is contributed by His-254.

It belongs to the UPF0046 family. In terms of assembly, homodimer. Mn(2+) is required as a cofactor. Requires Co(2+) as cofactor. Expressed in fetal brain (at protein level). detected in fetal and adult brain.

Inhibited by nmolar levels of AMP and GMP. Displays low metallophosphoesterase activity (in vitro). May play a role in the development of the nervous system. The protein is Metallophosphoesterase MPPED2 (Mpped2) of Rattus norvegicus (Rat).